Reading from the N-terminus, the 351-residue chain is Glycerol-1-phosphate dehydrogenase [NAD(P)+] (351 aa).

NAD(+) contacts are provided by residues Gly97–Asp101 and Thr119–Ser122. Asp124 provides a ligand contact to substrate. Ser128 lines the NAD(+) pocket. Asp171 serves as a coordination point for substrate. Zn(2+) contacts are provided by Asp171 and His251. His255 is a binding site for substrate. A Zn(2+)-binding site is contributed by His267.

The protein belongs to the glycerol-1-phosphate dehydrogenase family. Homodimer. The cofactor is Zn(2+).

Its subcellular location is the cytoplasm. It carries out the reaction sn-glycerol 1-phosphate + NAD(+) = dihydroxyacetone phosphate + NADH + H(+). The catalysed reaction is sn-glycerol 1-phosphate + NADP(+) = dihydroxyacetone phosphate + NADPH + H(+). It participates in membrane lipid metabolism; glycerophospholipid metabolism. In terms of biological role, catalyzes the NAD(P)H-dependent reduction of dihydroxyacetonephosphate (DHAP or glycerone phosphate) to glycerol 1-phosphate (G1P). The G1P thus generated is used as the glycerophosphate backbone of phospholipids in the cellular membranes of Archaea. The protein is Glycerol-1-phosphate dehydrogenase [NAD(P)+] of Saccharolobus islandicus (strain M.16.27) (Sulfolobus islandicus).